Reading from the N-terminus, the 310-residue chain is DnaJ-like protein MG002 (310 aa).

The J domain occupies 1 to 66; the sequence is MNLYDLLELP…KEKYDSMLKV (66 aa).

The polypeptide is DnaJ-like protein MG002 (Mycoplasma genitalium (strain ATCC 33530 / DSM 19775 / NCTC 10195 / G37) (Mycoplasmoides genitalium)).